A 110-amino-acid chain; its full sequence is MLFQNISSHLKYLNQVGSTRIQLALANFFAISCLWLKPQICGKFQLLVPFREETSNGNCSKCPSMIHFLPLISLTFAFSIIVVSTGMSSKNSSDSLAVTPLLLGNKGKPQ.

The next 2 helical transmembrane spans lie at 21-41 (IQLA…PQIC) and 63-83 (PSMI…IIVV).

The protein localises to the membrane. This is an uncharacterized protein from Saccharomyces cerevisiae (strain ATCC 204508 / S288c) (Baker's yeast).